The primary structure comprises 370 residues: uncharacterized protein (370 aa).

Residues 1-27 (MSSAANEGCVYLFIVVLRLSSFSCVNS) form the signal peptide. Asn59, Asn98, and Asn126 each carry an N-linked (GlcNAc...) asparagine glycan. 2 disordered regions span residues 81–101 (SRSHTKKADTRGTADGKNTTA) and 123–167 (LSEN…CHQP). The segment covering 139–148 (HDDDDDDDLE) has biased composition (acidic residues). N-linked (GlcNAc...) asparagine glycans are attached at residues Asn171, Asn221, Asn230, and Asn262.

This is an uncharacterized protein from Saccharomyces cerevisiae (strain ATCC 204508 / S288c) (Baker's yeast).